The following is a 338-amino-acid chain: Phosphatidylinositol:ceramide inositolphosphotransferase (338 aa).

Residues 1 to 36 lie on the Cytoplasmic side of the membrane; the sequence is MTSHVTAHDVGGNEDIGTDHVPWYKQPLPLCTQVMR. Residues 37-57 traverse the membrane as a helical segment; that stretch reads FILLLLLTVMFLGVAILVANA. Residues 58–87 are Extracellular-facing; sequence RMPDPEKVRPLPDLLLESIPKVALLENGTN. Residues 88–108 form a helical membrane-spanning segment; sequence VIIFLLNATTVVVGFKVFLLE. At 109–116 the chain is on the cytoplasmic side; it reads RHMNGLPR. A helical transmembrane segment spans residues 117–137; it reads VTFLVGVPKIGSFLNRMAFGV. The Extracellular segment spans residues 138–152; it reads LDSGRRPFPLKNVFP. Residues 153–173 form a helical membrane-spanning segment; the sequence is IMAIRFLTSYAVVMVFRAFVI. Topologically, residues 174–189 are cytoplasmic; that stretch reads MGTSYPATDNHCQNPQ. The helical transmembrane segment at 190 to 210 threads the bilayer; the sequence is VIEHPVLNVILTLVTLGSGAI. Topologically, residues 211–222 are extracellular; that stretch reads HCGDLMFSGHTM. Histidine 220 is a catalytic residue. A helical transmembrane segment spans residues 223–243; the sequence is ILSLAFILAWDYSPFLHPWAV. The Cytoplasmic portion of the chain corresponds to 244-338; the sequence is RVWVSVLLPI…TDASAALPEH (95 aa). Catalysis depends on residues histidine 264 and aspartate 268.

The protein belongs to the sphingomyelin synthase family.

The protein resides in the membrane. Functionally, bidirectional lipid inositolphosphotransferase capable of converting phosphatidylinositol (PI) and ceramide to inositol-phosphorylceramide (IPC) and diacylglycerol (DAG) and vice versa. Direction is dependent on the relative concentrations of DAG and ceramide as phosphoinositol acceptors. Essential for viability of the pathogenic bloodstream stage of this human protozoan parasite and, consequently, can be considered as potential drug target. The protein is Phosphatidylinositol:ceramide inositolphosphotransferase of Leishmania major.